A 385-amino-acid chain; its full sequence is Ethanolamine kinase 2 (385 aa).

Belongs to the choline/ethanolamine kinase family. As to expression, expressed in testis and liver. Low expression in ovary and kidney.

The enzyme catalyses ethanolamine + ATP = phosphoethanolamine + ADP + H(+). Its pathway is phospholipid metabolism; phosphatidylethanolamine biosynthesis; phosphatidylethanolamine from ethanolamine: step 1/3. Its function is as follows. Highly specific for ethanolamine phosphorylation. Does not have choline kinase activity. This is Ethanolamine kinase 2 (Etnk2) from Mus musculus (Mouse).